A 237-amino-acid chain; its full sequence is Phosphoribosylaminoimidazole-succinocarboxamide synthase (237 aa).

The protein belongs to the SAICAR synthetase family.

The enzyme catalyses 5-amino-1-(5-phospho-D-ribosyl)imidazole-4-carboxylate + L-aspartate + ATP = (2S)-2-[5-amino-1-(5-phospho-beta-D-ribosyl)imidazole-4-carboxamido]succinate + ADP + phosphate + 2 H(+). It participates in purine metabolism; IMP biosynthesis via de novo pathway; 5-amino-1-(5-phospho-D-ribosyl)imidazole-4-carboxamide from 5-amino-1-(5-phospho-D-ribosyl)imidazole-4-carboxylate: step 1/2. In Photorhabdus laumondii subsp. laumondii (strain DSM 15139 / CIP 105565 / TT01) (Photorhabdus luminescens subsp. laumondii), this protein is Phosphoribosylaminoimidazole-succinocarboxamide synthase.